We begin with the raw amino-acid sequence, 549 residues long: Cobalt-dependent inorganic pyrophosphatase (549 aa).

CBS domains are found at residues glutamate 74 to serine 130 and methionine 252 to valine 310. AMP contacts are provided by residues lysine 100, serine 116–asparagine 119, threonine 253, valine 258, and tyrosine 278–asparagine 280.

The protein belongs to the PPase family. Homodimer. The cofactor is Co(2+). Requires Mn(2+) as cofactor. It depends on Mg(2+) as a cofactor.

The enzyme catalyses diphosphate + H2O = 2 phosphate + H(+). Its activity is regulated as follows. Inhibited by AMP and ADP with 25% and 35% of activity remaining, respectively, at saturating conditions. Activated 5-fold by diadenosine polyphosphates(Ap[n]A) with n&gt;2 (Ap3A, Ap4A, Ap5A, Ap6A) at saturating conditions. This is Cobalt-dependent inorganic pyrophosphatase from Clostridium perfringens (strain 13 / Type A).